The primary structure comprises 153 residues: Late embryogenesis abundant protein B19.4 (153 aa).

Residues 1-153 (MASGQQERSE…IDESKFKTKS (153 aa)) form a disordered region. Composition is skewed to basic and acidic residues over residues 7–19 (ERSE…REGE), 32–122 (EAQE…EMGR), and 133–153 (GGER…KTKS). Tandem repeats lie at residues 43–62 (RGGQ…EMGH), 63–82 (KGGE…EMGH), 83–102 (KGGE…EMGH), and 103–122 (KGGE…EMGR). The interval 43 to 122 (RGGQTRKEQL…GEEGYREMGR (80 aa)) is 4 X 20 AA tandem repeats.

Belongs to the small hydrophilic plant seed protein family.

Lea proteins are late embryonic proteins abundant in higher plant seed embryos. This chain is Late embryogenesis abundant protein B19.4 (B19.4), found in Hordeum vulgare (Barley).